The following is a 199-amino-acid chain: Urease accessory protein UreG (199 aa).

8-15 is a GTP binding site; it reads GPVGSGKT.

Belongs to the SIMIBI class G3E GTPase family. UreG subfamily. Homodimer. UreH, UreF and UreG form a complex that acts as a GTP-hydrolysis-dependent molecular chaperone, activating the urease apoprotein by helping to assemble the nickel containing metallocenter of UreC. The UreE protein probably delivers the nickel.

Its subcellular location is the cytoplasm. Facilitates the functional incorporation of the urease nickel metallocenter. This process requires GTP hydrolysis, probably effectuated by UreG. The chain is Urease accessory protein UreG from Helicobacter pylori (strain G27).